The sequence spans 513 residues: MATEESGGLAQTAAVKLSEMGERTKQLGNAIQDPERQRRIILVIVCVALLLDNMLYMVIVPIVPDYLAHLESESEQAHVKGNSSINITQNENFDLQIGVLFASKAILQLLVNPLTGTFIDRVGYDIPLLIGLSIMFVSTCIFAFAENYATLFMARSLQGLGSAFADTSGIAMIADKYAEESERSRALGIALAFISFGSLAAPPFGGVLYEFAGKRFPFIALACVCLADGILCLTVLKPFSSRTRENMPVGTPIYKLMIDPYIAVVAGALTTCNIPLAFLEPTIANWMEETMNASQWQIGITWLPAFFPHILGVYLTVKLAAKYPHLQWFYGALGMVIIGASSCIVPACKNFEQLIIPLCGVCFGIALVDTALLPTLAFLVDVRHVSVYGSVYAIADISYCVAYALGPIVAGKIVHDLGFVQLNLGMGLANVLYAPALLLLRNVSLMKPSHSERNMLLEEGATGLYDTIRMEERQRKKHGYSSSGNCVPIDENGTFAGQSKSFSEEETSEPEYI.

Residues 1 to 39 (MATEESGGLAQTAAVKLSEMGERTKQLGNAIQDPERQRR) are Cytoplasmic-facing. The helical transmembrane segment at 40–60 (IILVIVCVALLLDNMLYMVIV) threads the bilayer. Topologically, residues 61–98 (PIVPDYLAHLESESEQAHVKGNSSINITQNENFDLQIG) are lumenal, vesicle. 2 N-linked (GlcNAc...) asparagine glycosylation sites follow: Asn-82 and Asn-86. The chain crosses the membrane as a helical span at residues 99 to 119 (VLFASKAILQLLVNPLTGTFI). The Cytoplasmic portion of the chain corresponds to 120-125 (DRVGYD). A helical transmembrane segment spans residues 126-146 (IPLLIGLSIMFVSTCIFAFAE). At 147–156 (NYATLFMARS) the chain is on the lumenal, vesicle side. The helical transmembrane segment at 157-174 (LQGLGSAFADTSGIAMIA) threads the bilayer. The Cytoplasmic portion of the chain corresponds to 175 to 186 (DKYAEESERSRA). A helical membrane pass occupies residues 187–207 (LGIALAFISFGSLAAPPFGGV). Topologically, residues 208–215 (LYEFAGKR) are lumenal, vesicle. A helical membrane pass occupies residues 216 to 236 (FPFIALACVCLADGILCLTVL). Topologically, residues 237–257 (KPFSSRTRENMPVGTPIYKLM) are cytoplasmic. The chain crosses the membrane as a helical span at residues 258-278 (IDPYIAVVAGALTTCNIPLAF). The Lumenal, vesicle portion of the chain corresponds to 279-296 (LEPTIANWMEETMNASQW). The N-linked (GlcNAc...) asparagine glycan is linked to Asn-292. Residues 297–317 (QIGITWLPAFFPHILGVYLTV) traverse the membrane as a helical segment. Residues 318–327 (KLAAKYPHLQ) are Cytoplasmic-facing. A helical membrane pass occupies residues 328-348 (WFYGALGMVIIGASSCIVPAC). The Lumenal, vesicle portion of the chain corresponds to 349–353 (KNFEQ). A helical membrane pass occupies residues 354-374 (LIIPLCGVCFGIALVDTALLP). Residues 375–390 (TLAFLVDVRHVSVYGS) lie on the Cytoplasmic side of the membrane. The chain crosses the membrane as a helical span at residues 391–411 (VYAIADISYCVAYALGPIVAG). Topologically, residues 412–418 (KIVHDLG) are lumenal, vesicle. The chain crosses the membrane as a helical span at residues 419–439 (FVQLNLGMGLANVLYAPALLL). At 440-513 (LRNVSLMKPS…EEETSEPEYI (74 aa)) the chain is on the cytoplasmic side. Residues 475-513 (RKKHGYSSSGNCVPIDENGTFAGQSKSFSEEETSEPEYI) are disordered. Acidic residues predominate over residues 504–513 (EEETSEPEYI).

Belongs to the major facilitator superfamily. Vesicular transporter family.

The protein resides in the membrane. Functionally, involved in acetylcholine transport into synaptic vesicles. The chain is Probable vesicular acetylcholine transporter-A from Danio rerio (Zebrafish).